The sequence spans 89 residues: Small ribosomal subunit protein uS15 (89 aa).

The protein belongs to the universal ribosomal protein uS15 family. In terms of assembly, part of the 30S ribosomal subunit. Forms a bridge to the 50S subunit in the 70S ribosome, contacting the 23S rRNA.

Functionally, one of the primary rRNA binding proteins, it binds directly to 16S rRNA where it helps nucleate assembly of the platform of the 30S subunit by binding and bridging several RNA helices of the 16S rRNA. Forms an intersubunit bridge (bridge B4) with the 23S rRNA of the 50S subunit in the ribosome. In Nostoc punctiforme (strain ATCC 29133 / PCC 73102), this protein is Small ribosomal subunit protein uS15.